The following is a 345-amino-acid chain: Arginine-hydroxylase NDUFAF5, mitochondrial (345 aa).

The N-terminal 36 residues, methionine 1–arginine 36, are a transit peptide targeting the mitochondrion.

The protein belongs to the methyltransferase superfamily. Interacts with NDUFAF8, leading to stabilize NDUFAF5. Interacts with NDUFS7. Interacts with PYURF (via TRM112 domain); the interaction is direct and stabilizes NDUFAF5 protein.

The protein localises to the mitochondrion inner membrane. In terms of biological role, arginine hydroxylase that mediates hydroxylation of 'Arg-111' of NDUFS7 and is involved in the assembly of mitochondrial NADH:ubiquinone oxidoreductase complex (complex I, MT-ND1) at early stages. May also have methyltransferase activity. This Homo sapiens (Human) protein is Arginine-hydroxylase NDUFAF5, mitochondrial.